Here is a 332-residue protein sequence, read N- to C-terminus: Centrosomal AT-AC splicing factor (332 aa).

A required for centrosome location region spans residues 1-169; sequence MAPAQRCPLC…QSRQEVVRSV (169 aa). Lys31 is subject to N6-acetyllysine; by NAT10. Residues 137–168 are a coiled coil; sequence LDSYEEKEDKVIKEMAAQIREVEQSRQEVVRS. The segment at 169–213 is disordered; the sequence is VLEPQAVPDPEEGSSAPRSWKGMNSQVASSLQQPSNLDLPPAPEL. The segment covering 190–204 has biased composition (polar residues); that stretch reads GMNSQVASSLQQPSN.

In terms of assembly, interacts with SASS6; the interaction increases with CENATAC acetylation. Acetylated. Acetylation oscillates throughout the cell cycle, and the acetylation state at Lys-31 is regulated by the deacetylase SIRT1 and the acetyltransferase NAT10. Deacetylated CENATAC is responsible for its centrosome targeting, and acetylated CENATAC promotes SASS6 degradation by enhancing the binding affinity of SASS6 for APC/C E3 ubiquitin-protein ligase complex/FZR1.

It localises to the cytoplasm. The protein localises to the cytoskeleton. It is found in the microtubule organizing center. The protein resides in the centrosome. In terms of biological role, component of the minor spliceosome that promotes splicing of a specific, rare minor intron subtype. Negative regulator of centrosome duplication. Constrains centriole number by modulating the degradation of the centrosome-duplication-associated protein SASS6 in an acetylation-dependent manner. SIRT1 deacetylates CENATAC in G1 phase, allowing for SASS6 accumulation on the centrosome and subsequent procentriole assembly. The CENATAC acetylation level is restored in mitosis by NAT10, promoting SASS6 proteasome degradation by facilitating SASS6 binding to APC/C E3 ubiquitin-protein ligase complex/FZR1. This is Centrosomal AT-AC splicing factor from Homo sapiens (Human).